The primary structure comprises 311 residues: Ceroid-lipofuscinosis neuronal protein 6 (311 aa).

Transmembrane regions (helical) follow at residues 56 to 76, 81 to 101, 111 to 131, 179 to 199, 204 to 224, 225 to 245, and 260 to 280; these read WVLD…WFPL, VGDY…LKLI, SITY…LVGD, CMWY…CFTA, SLIP…YWYL, VTEG…LALV, and LFLF…VAWL.

In terms of assembly, interacts with CRMP2. Interacts with CLN5. Interacts with CLN3.

Its subcellular location is the endoplasmic reticulum membrane. It is found in the endoplasmic reticulum. The sequence is that of Ceroid-lipofuscinosis neuronal protein 6 (CLN6) from Homo sapiens (Human).